We begin with the raw amino-acid sequence, 410 residues long: Replication factor C large subunit (410 aa).

Position 46 to 53 (46 to 53 (GDPGTGKT)) interacts with ATP.

The protein belongs to the activator 1 small subunits family. RfcL subfamily. In terms of assembly, heteromultimer composed of small subunits (RfcS) and large subunits (RfcL).

Part of the RFC clamp loader complex which loads the PCNA sliding clamp onto DNA. The protein is Replication factor C large subunit of Picrophilus torridus (strain ATCC 700027 / DSM 9790 / JCM 10055 / NBRC 100828 / KAW 2/3).